A 316-amino-acid chain; its full sequence is HPr kinase/phosphorylase (316 aa).

Catalysis depends on residues histidine 143 and lysine 164. Residue 158–165 (GEAGSGKS) coordinates ATP. Position 165 (serine 165) interacts with Mg(2+). Aspartate 182 (proton acceptor; for phosphorylation activity. Proton donor; for dephosphorylation activity) is an active-site residue. Residues 206 to 215 (LEVRGLGVLN) form an important for the catalytic mechanism of both phosphorylation and dephosphorylation region. Residue glutamate 207 participates in Mg(2+) binding. Arginine 251 is an active-site residue. Residues 272–277 (PVMPGR) are important for the catalytic mechanism of dephosphorylation.

It belongs to the HPrK/P family. In terms of assembly, homohexamer. Requires Mg(2+) as cofactor.

The catalysed reaction is [HPr protein]-L-serine + ATP = [HPr protein]-O-phospho-L-serine + ADP + H(+). It carries out the reaction [HPr protein]-O-phospho-L-serine + phosphate + H(+) = [HPr protein]-L-serine + diphosphate. Functionally, catalyzes the ATP- as well as the pyrophosphate-dependent phosphorylation of a specific serine residue in HPr, a phosphocarrier protein of the phosphoenolpyruvate-dependent sugar phosphotransferase system (PTS). HprK/P also catalyzes the pyrophosphate-producing, inorganic phosphate-dependent dephosphorylation (phosphorolysis) of seryl-phosphorylated HPr (P-Ser-HPr). The sequence is that of HPr kinase/phosphorylase from Xylella fastidiosa (strain 9a5c).